The sequence spans 529 residues: uncharacterized protein (529 aa).

Residues 13-129 (QTAMRKMRAL…LSTLCQEAQR (117 aa)) enclose the Arf-GAP domain. A C4-type zinc finger spans residues 28–51 (CFDCGARNPTWCTVTYGVFLCIDC). The span at 291 to 301 (QMEAKVAKDPT) shows a compositional bias: basic and acidic residues. Disordered stretches follow at residues 291–313 (QMEA…GMGG), 335–357 (VLTF…DDKY), 398–424 (KSRY…GASP), and 468–493 (FGSE…SDLK). Low complexity predominate over residues 399–420 (SRYTASSSSSSTSRAPTTRLTA). Residues 476–487 (NGSQQRQSSQVP) show a composition bias toward polar residues.

Its function is as follows. GTPase-activating protein for the ADP ribosylation factor family. This is an uncharacterized protein from Caenorhabditis elegans.